The chain runs to 362 residues: Cobalt-precorrin-5B C(1)-methyltransferase (362 aa).

This sequence belongs to the CbiD family.

The catalysed reaction is Co-precorrin-5B + S-adenosyl-L-methionine = Co-precorrin-6A + S-adenosyl-L-homocysteine. It functions in the pathway cofactor biosynthesis; adenosylcobalamin biosynthesis; cob(II)yrinate a,c-diamide from sirohydrochlorin (anaerobic route): step 6/10. Its function is as follows. Catalyzes the methylation of C-1 in cobalt-precorrin-5B to form cobalt-precorrin-6A. The polypeptide is Cobalt-precorrin-5B C(1)-methyltransferase (Burkholderia thailandensis (strain ATCC 700388 / DSM 13276 / CCUG 48851 / CIP 106301 / E264)).